The chain runs to 404 residues: Protein ARK2N (404 aa).

Basic and acidic residues-rich tracts occupy residues 1–12 (MKMEEAVGKVEE) and 23–32 (SEQETAKEED). Disordered regions lie at residues 1–50 (MKME…ADST) and 63–255 (RRDS…TNSD). Serine 66 carries the phosphoserine modification. The residue at position 67 (serine 67) is a Phosphoserine; by AMPK. Residues 87-121 (SDSSNHCMLSPSSSGHLADSDTLSSAEENEPSQAE) show a composition bias toward polar residues. Serine 143, serine 145, and serine 147 each carry phosphoserine. A compositionally biased stretch (basic residues) spans 169-187 (AKVKGHRSQKHKERIRLLR). Residues 175-200 (RSQKHKERIRLLRQKREAAARKKYNL) adopt a coiled-coil conformation. The segment at 202 to 226 (QDSSTSDSDLTCDSSTSSSDDDEEV) is required for interaction with CSNK2B. Residues 203–219 (DSSTSDSDLTCDSSTSS) show a composition bias toward low complexity. 3 positions are modified to phosphoserine: serine 327, serine 328, and serine 330. Arginine 347 carries the omega-N-methylarginine modification. A Glycyl lysine isopeptide (Lys-Gly) (interchain with G-Cter in SUMO2) cross-link involves residue lysine 358.

In terms of assembly, interacts with CSNK2B (via KSSR). Interacts with JUN; the interaction is mediated by CSNK2B. In terms of processing, phosphorylated at Ser-67 by AMPK. In skeletal muscle, phosphorylation is induced by exercise and seems to increase muscle contractile function. As to expression, expressed in skeletal muscle.

The protein resides in the nucleus. AMPK substrate important for exercise capacity and skeletal muscle function. Required for normal contraction-induced signaling. Functionally, (Microbial infection) Upon Epstein-Barr virus (EBV) infection, suppresses viral BZLF1 expression and subsequent EBV reactivation by interacting with JUN and inhibiting its transcriptional activator activity on BZLF1 Z promoter. The chain is Protein ARK2N from Homo sapiens (Human).